Consider the following 216-residue polypeptide: Orotate phosphoribosyltransferase (216 aa).

Residue lysine 30 participates in 5-phospho-alpha-D-ribose 1-diphosphate binding. 38-39 contacts orotate; sequence FF. 5-phospho-alpha-D-ribose 1-diphosphate is bound by residues 75 to 76, arginine 102, lysine 103, lysine 106, histidine 108, and 128 to 136; these read YK and DDVITAGTA. Positions 132 and 160 each coordinate orotate.

This sequence belongs to the purine/pyrimidine phosphoribosyltransferase family. PyrE subfamily. In terms of assembly, homodimer. The cofactor is Mg(2+).

The catalysed reaction is orotidine 5'-phosphate + diphosphate = orotate + 5-phospho-alpha-D-ribose 1-diphosphate. Its pathway is pyrimidine metabolism; UMP biosynthesis via de novo pathway; UMP from orotate: step 1/2. Functionally, catalyzes the transfer of a ribosyl phosphate group from 5-phosphoribose 1-diphosphate to orotate, leading to the formation of orotidine monophosphate (OMP). This Acinetobacter baumannii (strain ACICU) protein is Orotate phosphoribosyltransferase.